The sequence spans 503 residues: Inosine-5'-monophosphate dehydrogenase 1 (503 aa).

S2 bears the N-acetylserine mark. One can recognise a CBS domain in the interval 167–225; sequence MKSCDSSDYCVPWEIDFEKLEFVLEDKQKGFVVLERDGETVNVVTKDDIQRVKGYPKSG. Residues 265–267 and 315–317 each bind NAD(+); these read DSS and GMG. The K(+) site is built by G317 and G319. S320 provides a ligand contact to IMP. C322 provides a ligand contact to K(+). C322 functions as the Thioimidate intermediate in the catalytic mechanism. IMP is bound by residues 355 to 357, 378 to 379, and 402 to 406; these read DGG, GS, and YRGMG. The active-site Proton acceptor is the R418. Q430 contributes to the IMP binding site. Residues E489, G490, and G491 each contribute to the K(+) site.

It belongs to the IMPDH/GMPR family. In terms of assembly, homotetramer. It depends on K(+) as a cofactor.

The protein localises to the cytoplasm. The catalysed reaction is IMP + NAD(+) + H2O = XMP + NADH + H(+). It participates in purine metabolism; XMP biosynthesis via de novo pathway; XMP from IMP: step 1/1. Mycophenolic acid (MPA) is a non-competitive inhibitor that prevents formation of the closed enzyme conformation by binding to the same site as the amobile flap. In contrast, mizoribine monophosphate (MZP) is a competitive inhibitor that induces the closed conformation. MPA is a potent inhibitor of mammalian IMPDHs but a poor inhibitor of the bacterial enzymes. MZP is a more potent inhibitor of bacterial IMPDH. In terms of biological role, catalyzes the conversion of inosine 5'-phosphate (IMP) to xanthosine 5'-phosphate (XMP), the first committed and rate-limiting step in the de novo synthesis of guanine nucleotides, and therefore plays an important role in the regulation of cell growth. The chain is Inosine-5'-monophosphate dehydrogenase 1 from Arabidopsis thaliana (Mouse-ear cress).